The following is a 493-amino-acid chain: UDP-N-acetylmuramoylalanine--D-glutamate ligase (493 aa).

Residue 126–132 coordinates ATP; the sequence is GTNGKTT.

Belongs to the MurCDEF family.

It localises to the cytoplasm. It carries out the reaction UDP-N-acetyl-alpha-D-muramoyl-L-alanine + D-glutamate + ATP = UDP-N-acetyl-alpha-D-muramoyl-L-alanyl-D-glutamate + ADP + phosphate + H(+). It participates in cell wall biogenesis; peptidoglycan biosynthesis. Cell wall formation. Catalyzes the addition of glutamate to the nucleotide precursor UDP-N-acetylmuramoyl-L-alanine (UMA). This chain is UDP-N-acetylmuramoylalanine--D-glutamate ligase, found in Mycolicibacterium smegmatis (strain ATCC 700084 / mc(2)155) (Mycobacterium smegmatis).